We begin with the raw amino-acid sequence, 96 residues long: UPF0235 protein YPK_0828 (96 aa).

Belongs to the UPF0235 family.

The polypeptide is UPF0235 protein YPK_0828 (Yersinia pseudotuberculosis serotype O:3 (strain YPIII)).